Here is a 169-residue protein sequence, read N- to C-terminus: Cuticle protein 21 (169 aa).

6 repeat units span residues 21–24 (AAPV), 27–30 (AAPA), 33–36 (AAPV), 39–42 (AAPA), 47–50 (AAPV), and 53–56 (AAPA). One can recognise a Chitin-binding type R&amp;R domain in the interval 65–135 (NPQYSYAYNV…KEAGAHPAPV (71 aa)). Tandem repeats lie at residues 140–143 (AAPV), 146–149 (AAPA), and 160–163 (AAPA).

Component of the cuticle of migratory locust which contains more than 100 different structural proteins. The chain is Cuticle protein 21 (ACP21) from Locusta migratoria (Migratory locust).